Consider the following 209-residue polypeptide: ATP-dependent Clp protease proteolytic subunit 1 (209 aa).

Ser109 serves as the catalytic Nucleophile. His134 is an active-site residue.

Belongs to the peptidase S14 family. Fourteen ClpP subunits assemble into 2 heptameric rings which stack back to back to give a disk-like structure with a central cavity, resembling the structure of eukaryotic proteasomes.

Its subcellular location is the cytoplasm. The enzyme catalyses Hydrolysis of proteins to small peptides in the presence of ATP and magnesium. alpha-casein is the usual test substrate. In the absence of ATP, only oligopeptides shorter than five residues are hydrolyzed (such as succinyl-Leu-Tyr-|-NHMec, and Leu-Tyr-Leu-|-Tyr-Trp, in which cleavage of the -Tyr-|-Leu- and -Tyr-|-Trp bonds also occurs).. Cleaves peptides in various proteins in a process that requires ATP hydrolysis. Has a chymotrypsin-like activity. Plays a major role in the degradation of misfolded proteins. The protein is ATP-dependent Clp protease proteolytic subunit 1 of Corynebacterium diphtheriae (strain ATCC 700971 / NCTC 13129 / Biotype gravis).